A 383-amino-acid polypeptide reads, in one-letter code: MSPEVALNRISPMLSPFISSVVRNGKVGLDATNCLRITDLKSGCTSLTPGPNCDRFKLHIPYAGETLKWDIIFNAQYPELPPDFIFGEDVEFLPDPSALQNLASWNPSNPECLLLVVKELVQQYHQFQCSRLRESSRLMFEYQTLLEEPQYGENMEIYAGKKNNWTGEFSARFLLKLPVDFSNIPTYLLKDVNEDPGEDVALLSVSFEDTEATQVYPKLYLSPRIEHALGGSSALHIPAFPGGGCLIDYVPQVCHLLTNKVQYVIQGYHKRREYIAAFLSHFGTGVVEYDAEGFTKLTLLLMWKDFCFLVHIDLPLFFPRDQPTLTFQSVYHFTNSGQLYSQAQKNYPYSPRWDGNEMAKRAKAYFKTFVPQFQEAAFANGKL.

M1 is subject to N-acetylmethionine. S2 is modified (phosphoserine). 2 UEV-like regions span residues D30–E147 and I275–A364.

Belongs to the BABAM2 family. As to quaternary structure, component of the ARISC complex, at least composed of UIMC1/RAP80, ABRAXAS1, BRCC3/BRCC36, BABAM2 and BABAM1/NBA1. Component of the BRCA1-A complex, at least composed of BRCA1, BARD1, UIMC1/RAP80, ABRAXAS1, BRCC3/BRCC36, BABAM2 and BABAM1/NBA1. In the BRCA1-A complex, interacts directly with ABRAXAS1, BRCC3/BRCC36 and BABAM1/NBA1. Binds polyubiquitin. Component of the BRISC complex, at least composed of ABRAXAS2, BRCC3/BRCC36, BABAM2 and BABAM1/NBA1. Identified in a complex with SHMT2 and the other subunits of the BRISC complex. Component of the BRCA1/BRCA2 containing complex (BRCC), which also contains BRCA1, BRCA2, BARD1, BRCC3/BRCC36 and RAD51. BRCC is a ubiquitin E3 ligase complex that enhances cellular survival following DNA damage. May interact with FAS and TNFRSF1A.

The protein localises to the cytoplasm. The protein resides in the nucleus. Its function is as follows. Component of the BRCA1-A complex, a complex that specifically recognizes 'Lys-63'-linked ubiquitinated histones H2A and H2AX at DNA lesions sites, leading to target the BRCA1-BARD1 heterodimer to sites of DNA damage at double-strand breaks (DSBs). The BRCA1-A complex also possesses deubiquitinase activity that specifically removes 'Lys-63'-linked ubiquitin on histones H2A and H2AX. In the BRCA1-A complex, it acts as an adapter that bridges the interaction between BABAM1/NBA1 and the rest of the complex, thereby being required for the complex integrity and modulating the E3 ubiquitin ligase activity of the BRCA1-BARD1 heterodimer. Component of the BRISC complex, a multiprotein complex that specifically cleaves 'Lys-63'-linked ubiquitin in various substrates. Within the BRISC complex, acts as an adapter that bridges the interaction between BABAM1/NBA1 and the rest of the complex, thereby being required for the complex integrity. The BRISC complex is required for normal mitotic spindle assembly and microtubule attachment to kinetochores via its role in deubiquitinating NUMA1. The BRISC complex plays a role in interferon signaling via its role in the deubiquitination of the interferon receptor IFNAR1; deubiquitination increases IFNAR1 activity by enhancing its stability and cell surface expression. Down-regulates the response to bacterial lipopolysaccharide (LPS) via its role in IFNAR1 deubiquitination. May play a role in homeostasis or cellular differentiation in cells of neural, epithelial and germline origins. May also act as a death receptor-associated anti-apoptotic protein, which inhibits the mitochondrial apoptotic pathway. May regulate TNF-alpha signaling through its interactions with TNFRSF1A; however these effects may be indirect. This is BRISC and BRCA1-A complex member 2 (BABAM2) from Chlorocebus aethiops (Green monkey).